The chain runs to 211 residues: Orotidine 5'-phosphate decarboxylase (211 aa).

Substrate is bound by residues Asp-7, Lys-29, 57–66 (DLKLADIPNT), Ser-109, 162–172 (PGIGAQGGSPV), Gly-185, and Arg-186. Lys-59 (proton donor) is an active-site residue.

The protein belongs to the OMP decarboxylase family. Type 1 subfamily. In terms of assembly, homodimer.

The catalysed reaction is orotidine 5'-phosphate + H(+) = UMP + CO2. It participates in pyrimidine metabolism; UMP biosynthesis via de novo pathway; UMP from orotate: step 2/2. Its function is as follows. Catalyzes the decarboxylation of orotidine 5'-monophosphate (OMP) to uridine 5'-monophosphate (UMP). This Pyrococcus furiosus (strain ATCC 43587 / DSM 3638 / JCM 8422 / Vc1) protein is Orotidine 5'-phosphate decarboxylase.